The primary structure comprises 136 residues: Protein K5 (136 aa).

Belongs to the poxviridae K5 protein family.

This is Protein K5 from Homo sapiens (Human).